The sequence spans 51 residues: Large ribosomal subunit protein eL39 (51 aa).

This sequence belongs to the eukaryotic ribosomal protein eL39 family. As to quaternary structure, interacts with YIH1.

This is Large ribosomal subunit protein eL39 (RPL39) from Kluyveromyces lactis (strain ATCC 8585 / CBS 2359 / DSM 70799 / NBRC 1267 / NRRL Y-1140 / WM37) (Yeast).